The primary structure comprises 275 residues: UDP-Gal:alpha-D-GlcNAc-diphosphoundecaprenol beta-1,3-galactosyltransferase (275 aa).

It belongs to the glycosyltransferase 2 family. It depends on Mn(2+) as a cofactor.

It localises to the cell inner membrane. It catalyses the reaction N-acetyl-alpha-D-glucosaminyl-di-trans,octa-cis-undecaprenyl diphosphate + UDP-alpha-D-galactose = beta-D-Gal-(1-&gt;3)-alpha-D-GlcNAc-di-trans,octa-cis-undecaprenyl diphosphate + UDP + H(+). Its pathway is bacterial outer membrane biogenesis; LPS O-antigen biosynthesis. Functionally, catalyzes the addition of Gal, the second sugar moiety of the O7-antigen repeating unit, to GlcNAc-pyrophosphate-undecaprenol. The sequence is that of UDP-Gal:alpha-D-GlcNAc-diphosphoundecaprenol beta-1,3-galactosyltransferase (wbbD) from Escherichia coli.